Consider the following 439-residue polypeptide: MSYFNEIGTIQYEGAKSDNPFAFKFYNPTESINGQTMEEHLRFGVAYWHTFTEDLSDPFGNGTAIRPWDKFNGMDLAKARVEAAFEFFEKLQIPYFCFHDVDIAPEGSSLKESNENLDTVVAMIKEYMKDSKTKLLWNTVNNFTHPRFVHGAASSNNADVFAYAAAKVKKGLEVGKELGAENYVFWGGREGYETLLNTNMKLELDNLARFFHMAKDYANEIDFNAQFLIEPKPKEPTSHQYDFDVASGYAFLQNYDLQDTFKFNIEANHATLAGHTFEHELHYARIHNMLGSVDANQGHPLLGWDTDEFPSDIYTTTLAMYEILKNDGLGKGGLNFDAKVRRGSFTAEDLFHAHIAGMDSFAIGLKVAQRLMDDRVLENVVEDRYRSFNQGIGRDIVSGKTDFHQLEKHALTLSEITQPSGQLEVIKNKINQYLLTTFA.

Residues H99 and D102 contribute to the active site. Residues E230, E266, H269, D294, D305, D307, and D337 each coordinate Mg(2+).

The protein belongs to the xylose isomerase family. As to quaternary structure, homotetramer. Mg(2+) is required as a cofactor.

It is found in the cytoplasm. It catalyses the reaction alpha-D-xylose = alpha-D-xylulofuranose. The sequence is that of Xylose isomerase from Oceanobacillus iheyensis (strain DSM 14371 / CIP 107618 / JCM 11309 / KCTC 3954 / HTE831).